We begin with the raw amino-acid sequence, 566 residues long: Urease subunit alpha 2 (566 aa).

The Urease domain occupies 128-566 (GGVDTHIHFI…LPMAQRYFLF (439 aa)). Residues His133, His135, and Lys216 each contribute to the Ni(2+) site. Lys216 carries the N6-carboxylysine modification. Residue His218 coordinates substrate. His245 and His271 together coordinate Ni(2+). The Proton donor role is filled by His319. Asp359 serves as a coordination point for Ni(2+).

Belongs to the metallo-dependent hydrolases superfamily. Urease alpha subunit family. As to quaternary structure, may form a heterohexamer of 3 UreC (alpha) and 3 UreAB (gamma/beta) subunits. May also form a heterotrimer of UreA (gamma), UreB (beta) and UreC (alpha) subunits. Three heterotrimers associate to form the active enzyme. Ni cation is required as a cofactor. In terms of processing, carboxylation allows a single lysine to coordinate two nickel ions.

The protein localises to the cytoplasm. It catalyses the reaction urea + 2 H2O + H(+) = hydrogencarbonate + 2 NH4(+). It functions in the pathway nitrogen metabolism; urea degradation; CO(2) and NH(3) from urea (urease route): step 1/1. The protein is Urease subunit alpha 2 of Pseudomonas syringae pv. syringae (strain B728a).